The following is a 29-amino-acid chain: uncharacterized protein (29 aa).

The protein resides in the plastid. The protein localises to the chloroplast. This is an uncharacterized protein from Trieres chinensis (Marine centric diatom).